A 169-amino-acid chain; its full sequence is ATP synthase subunit b (169 aa).

Residues 26-46 traverse the membrane as a helical segment; it reads FFFVLLIFLIVLGVIAKWVVP.

It belongs to the ATPase B chain family. F-type ATPases have 2 components, F(1) - the catalytic core - and F(0) - the membrane proton channel. F(1) has five subunits: alpha(3), beta(3), gamma(1), delta(1), epsilon(1). F(0) has three main subunits: a(1), b(2) and c(10-14). The alpha and beta chains form an alternating ring which encloses part of the gamma chain. F(1) is attached to F(0) by a central stalk formed by the gamma and epsilon chains, while a peripheral stalk is formed by the delta and b chains.

It is found in the cell membrane. In terms of biological role, f(1)F(0) ATP synthase produces ATP from ADP in the presence of a proton or sodium gradient. F-type ATPases consist of two structural domains, F(1) containing the extramembraneous catalytic core and F(0) containing the membrane proton channel, linked together by a central stalk and a peripheral stalk. During catalysis, ATP synthesis in the catalytic domain of F(1) is coupled via a rotary mechanism of the central stalk subunits to proton translocation. Functionally, component of the F(0) channel, it forms part of the peripheral stalk, linking F(1) to F(0). The sequence is that of ATP synthase subunit b from Mycobacterium sp. (strain JLS).